The following is a 963-amino-acid chain: MERREEQPGAAGAGAAPALDFTVENVEKALHQLYYDPNIENKNLAQKWLMQAQASPQAWHFSWQLLQPDKVPEIQYFGASALHIKISRYWSDIPTDQYESLKAQLFTQITRFASGSKIVLTRLCVALASLALSMMPDAWPCAVADMVRLFQAEDSPVDSQGRCLALLELLTVLPEEFQTSRLPQYRKSLVRTSLAVECGAVFPLLEQLLQQPSSPSCVRQKVLKCFSSWVQLEVPLQDCEALIQAAFAALQDSELFDSSVEAIVNAISQPDAQRYVNTLLKLIPLVLGLQDQLRQAVQNGDMETSHGICRIAVALGENHSRALLDQVEHWQSFLALVNMIMFCTGIPGHFPVNETTSSLTLTFWYTLQDDILSFEAEKQAVYQQVYRPVYFQLVDVLLHKAQFPSDEEYGFWSSDEKEQFRIYRVDISDTLMYVYEMLGAELLSNLYDKLGRLLTSSEEPYSWQHTEALLYGFQSIAETIDVNYSDVVPGLIGLIPRISISNVQLADTVMFTIGALSEWLADHPVMINSVLPLVLHALGNPELSISSVSTLKKICRECKYDLPPYAANIVAVSQDVLMKQIHKTSQCMWLMQALGFLLSALQVEEILKNLHSLISPYIQQLEKLAEEIPNPSNKLAIVHILGLLSNLFTTLDVSHHEDDHEGSELRKLPVPQGPNPVVVVLQQVFQLIQKVLSKWLNDAQVVEAVCAIFEKSVKTLLDDFAPMVPQLCEMLGRMYSTIPQASALDLTRQLVHIFAHEPAHFPPIEALFLLVTSVTLTLFQQGPRDHPDIVDSFMQLLAQALKRKPDLFLCERLDVKAVFQCAVLALKFPEAPTVKASCGFFTELLPRCGEVEPVGKVVQEDGRMLLIAVLEAIGGQASRSLMDCFADILFALNKHCFSLLSVWIKEALQAPGFPSARLSPEQKDTFSQQILRERVNKRRVKEMVKEFTLLCRGLHGTDYTADY.

20 HEAT repeats span residues 24-54 (ENVEKALHQLYYDPNIENKNLAQKWLMQAQA), 56-88 (PQAWHFSWQLLQPDKVPEIQYFGASALHIKISR), 95-135 (TDQY…LSMM), 142-179 (AVADMVRLFQAEDSPVDSQGRCLALLELLTVLPEEFQT), 194-231 (LAVECGAVFPLLEQLLQQPSSPSCVRQKVLKCFSSWVQ), 236-268 (LQDCEALIQAAFAALQDSELFDSSVEAIVNAIS), 276-325 (VNTL…ALLD), 330-372 (WQSF…DDIL), 375-438 (EAEK…YEML), 440-476 (AELLSNLYDKLGRLLTSSEEPYSWQHTEALLYGFQSI), 487-522 (VVPGLIGLIPRISISNVQLADTVMFTIGALSEWLAD), 524-558 (PVMINSVLPLVLHALGNPELSISSVSTLKKICREC), 562-600 (LPPYAANIVAVSQDVLMKQIHKTSQCMWLMQALGFLLSA), 603-648 (VEEI…SNLF), 676-716 (PVVV…VKTL), 720-754 (FAPMVPQLCEMLGRMYSTIPQASALDLTRQLVHIF), 761-803 (FPPI…ALKR), 815-845 (VKAVFQCAVLALKFPEAPTVKASCGFFTELL), 860-893 (EDGRMLLIAVLEAIGGQASRSLMDCFADILFALN), and 897-931 (FSLLSVWIKEALQAPGFPSARLSPEQKDTFSQQIL). The Importin N-terminal domain occupies 45 to 111 (AQKWLMQAQA…KAQLFTQITR (67 aa)).

Belongs to the importin beta family. Interacts with UBC9, RAN, RBM8A, eIF-1A and PAX6.

Its subcellular location is the cytoplasm. The protein resides in the nucleus. In terms of biological role, functions in nuclear protein import as nuclear transport receptor. Serves as receptor for nuclear localization signals (NLS) in cargo substrates. Is thought to mediate docking of the importin/substrate complex to the nuclear pore complex (NPC) through binding to nucleoporin and the complex is subsequently translocated through the pore by an energy requiring, Ran-dependent mechanism. At the nucleoplasmic side of the NPC, Ran binds to the importin, the importin/substrate complex dissociates and importin is re-exported from the nucleus to the cytoplasm where GTP hydrolysis releases Ran. The directionality of nuclear import is thought to be conferred by an asymmetric distribution of the GTP- and GDP-bound forms of Ran between the cytoplasm and nucleus. Mediates the nuclear import of UBC9, the RBM8A/MAGOH complex, PAX6 and probably other members of the paired homeobox family. Also mediates nuclear export of eIF-1A, and the cytoplasmic release of eIF-1A is triggered by the loading of import substrates onto IPO13. In Bos taurus (Bovine), this protein is Importin-13 (IPO13).